A 158-amino-acid polypeptide reads, in one-letter code: Transcription elongation factor GreA (158 aa).

Residues 53–75 adopt a coiled-coil conformation; it reads AKERQGQVEATIGDLEDKLSRAQ.

Belongs to the GreA/GreB family.

Its function is as follows. Necessary for efficient RNA polymerase transcription elongation past template-encoded arresting sites. The arresting sites in DNA have the property of trapping a certain fraction of elongating RNA polymerases that pass through, resulting in locked ternary complexes. Cleavage of the nascent transcript by cleavage factors such as GreA or GreB allows the resumption of elongation from the new 3'terminus. GreA releases sequences of 2 to 3 nucleotides. This Sphingopyxis alaskensis (strain DSM 13593 / LMG 18877 / RB2256) (Sphingomonas alaskensis) protein is Transcription elongation factor GreA.